Reading from the N-terminus, the 325-residue chain is tRNA dimethylallyltransferase (325 aa).

16-23 (GPTASGKT) contributes to the ATP binding site. 18-23 (TASGKT) is a substrate binding site. Interaction with substrate tRNA regions lie at residues 41–44 (DSAL), 165–169 (QRIQR), 253–258 (RCVGYR), and 286–293 (KRQITWLR).

This sequence belongs to the IPP transferase family. Monomer. Mg(2+) is required as a cofactor.

The enzyme catalyses adenosine(37) in tRNA + dimethylallyl diphosphate = N(6)-dimethylallyladenosine(37) in tRNA + diphosphate. Catalyzes the transfer of a dimethylallyl group onto the adenine at position 37 in tRNAs that read codons beginning with uridine, leading to the formation of N6-(dimethylallyl)adenosine (i(6)A). The sequence is that of tRNA dimethylallyltransferase from Ralstonia pickettii (strain 12J).